The chain runs to 118 residues: UPF0344 protein RBAM_010920 (118 aa).

A run of 4 helical transmembrane segments spans residues 4–24, 33–53, 62–82, and 93–113; these read WHIT…GLYG, ITHM…AELF, EYAG…MLVI, and LWIG…HLPI.

Belongs to the UPF0344 family.

It localises to the cell membrane. The sequence is that of UPF0344 protein RBAM_010920 from Bacillus velezensis (strain DSM 23117 / BGSC 10A6 / LMG 26770 / FZB42) (Bacillus amyloliquefaciens subsp. plantarum).